The chain runs to 263 residues: HTH-type transcriptional repressor NanR (263 aa).

The tract at residues 1-25 is disordered; it reads MDVMNAFDSQAEDSPTSLGRSLRRR. An HTH gntR-type domain is found at 30–98; sequence KKLSEMVEEE…NGERARVSRP (69 aa). Positions 58–77 form a DNA-binding region, H-T-H motif; sequence ERELMAFFNVGRPSVREALA.

The protein belongs to the NanR family.

Functionally, transcriptional repressor that controls expression of the genes required for the catabolism of sialic acids. The protein is HTH-type transcriptional repressor NanR of Salmonella choleraesuis (strain SC-B67).